Reading from the N-terminus, the 441-residue chain is Peroxisomal biogenesis factor 3 (441 aa).

Residues 1–17 are Peroxisomal-facing; it reads MAPNQRSRSLLQRHRGK. Residues 18–39 traverse the membrane as a helical segment; it reads VLISLTGIAALFTTGSVVVFFV. The Cytoplasmic portion of the chain corresponds to 40–441; sequence KRWLYKQQLR…GVSSSFSFKP (402 aa).

This sequence belongs to the peroxin-3 family. Interacts with MSP1; leading to inhibit the translocase activity of MSP1.

It localises to the peroxisome membrane. Functionally, involved in peroxisome biosynthesis. Acts as a regulator of MSP1 by inhibiting the ability of MSP1 to unfold target proteins. The protein is Peroxisomal biogenesis factor 3 (PEX3) of Saccharomyces cerevisiae (strain ATCC 204508 / S288c) (Baker's yeast).